The chain runs to 49 residues: uncharacterized protein (49 aa).

Residues 5–27 form a helical membrane-spanning segment; it reads ILEILSAFIRILFKLLYCWALFF.

Its subcellular location is the membrane. This is an uncharacterized protein from Saccharomyces cerevisiae (strain ATCC 204508 / S288c) (Baker's yeast).